The following is a 267-amino-acid chain: Dihydropteroate synthase (267 aa).

Positions 1 to 251 (MTKTKIIGIL…NVDLNVKLAQ (251 aa)) constitute a Pterin-binding domain. A Mg(2+)-binding site is contributed by Asn11. (7,8-dihydropterin-6-yl)methyl diphosphate is bound by residues Thr51, Asp84, Asn103, Asp167, Lys203, and 239-241 (RVH).

The protein belongs to the DHPS family. The cofactor is Mg(2+).

The enzyme catalyses (7,8-dihydropterin-6-yl)methyl diphosphate + 4-aminobenzoate = 7,8-dihydropteroate + diphosphate. It functions in the pathway cofactor biosynthesis; tetrahydrofolate biosynthesis; 7,8-dihydrofolate from 2-amino-4-hydroxy-6-hydroxymethyl-7,8-dihydropteridine diphosphate and 4-aminobenzoate: step 1/2. Catalyzes the condensation of para-aminobenzoate (pABA) with 6-hydroxymethyl-7,8-dihydropterin diphosphate (DHPt-PP) to form 7,8-dihydropteroate (H2Pte), the immediate precursor of folate derivatives. The sequence is that of Dihydropteroate synthase (folP) from Staphylococcus haemolyticus.